The chain runs to 344 residues: Anthranilate phosphoribosyltransferase (344 aa).

5-phospho-alpha-D-ribose 1-diphosphate contacts are provided by residues G85, 88–89 (GD), T93, 95–98 (NIST), 113–121 (KHGNRSVSS), and S125. An anthranilate-binding site is contributed by G85. S97 provides a ligand contact to Mg(2+). N116 contributes to the anthranilate binding site. Anthranilate is bound at residue R171. Mg(2+) is bound by residues D229 and E230.

The protein belongs to the anthranilate phosphoribosyltransferase family. In terms of assembly, homodimer. It depends on Mg(2+) as a cofactor.

The enzyme catalyses N-(5-phospho-beta-D-ribosyl)anthranilate + diphosphate = 5-phospho-alpha-D-ribose 1-diphosphate + anthranilate. It functions in the pathway amino-acid biosynthesis; L-tryptophan biosynthesis; L-tryptophan from chorismate: step 2/5. Its function is as follows. Catalyzes the transfer of the phosphoribosyl group of 5-phosphorylribose-1-pyrophosphate (PRPP) to anthranilate to yield N-(5'-phosphoribosyl)-anthranilate (PRA). This Shewanella amazonensis (strain ATCC BAA-1098 / SB2B) protein is Anthranilate phosphoribosyltransferase.